A 361-amino-acid polypeptide reads, in one-letter code: Isopentenyl-diphosphate delta-isomerase (361 aa).

12 to 13 (RK) lines the substrate pocket. FMN-binding positions include Ser70, 71–73 (SMT), Ser101, and Asn130. 101 to 103 (SMR) is a binding site for substrate. Position 165 (Gln165) interacts with substrate. Residue Glu166 participates in Mg(2+) binding. Residues Lys197 and 310-311 (AG) contribute to the FMN site.

This sequence belongs to the IPP isomerase type 2 family. In terms of assembly, homooctamer. Dimer of tetramers. FMN is required as a cofactor. It depends on NADPH as a cofactor. The cofactor is Mg(2+).

The protein localises to the cytoplasm. The catalysed reaction is isopentenyl diphosphate = dimethylallyl diphosphate. In terms of biological role, involved in the biosynthesis of isoprenoids. Catalyzes the 1,3-allylic rearrangement of the homoallylic substrate isopentenyl (IPP) to its allylic isomer, dimethylallyl diphosphate (DMAPP). The sequence is that of Isopentenyl-diphosphate delta-isomerase from Chlorobium luteolum (strain DSM 273 / BCRC 81028 / 2530) (Pelodictyon luteolum).